We begin with the raw amino-acid sequence, 179 residues long: Casparian strip membrane protein 1 (179 aa).

Residues 1 to 17 (MKAGPLQLGVVPPANRA) are Cytoplasmic-facing. A helical membrane pass occupies residues 18–38 (IAILDFFLRPIAIVGTLASAI). Over 39–67 (AMATTNQTLPFFSQFIRFRAKFNDLPSFT) the chain is Extracellular. The N-linked (GlcNAc...) asparagine glycan is linked to asparagine 44. A helical membrane pass occupies residues 68-88 (FFVVASSIVSAYLILSLGFSI). Residues 89–100 (LHIAKSNLVNSR) lie on the Cytoplasmic side of the membrane. A helical membrane pass occupies residues 101-121 (VLLLLLDTAAMGLLMAGSAAA). Residues 122–154 (TAIVQLAHKGNNKVNWFAICQQYNSFCKRVSGS) lie on the Extracellular side of the membrane. The chain crosses the membrane as a helical span at residues 155-175 (LIGSYAGVVVLILLILLSGVA). The Cytoplasmic segment spans residues 176–179 (LSRR).

This sequence belongs to the Casparian strip membrane proteins (CASP) family. Homodimer and heterodimers.

It is found in the cell membrane. Functionally, regulates membrane-cell wall junctions and localized cell wall deposition. Required for establishment of the Casparian strip membrane domain (CSD) and the subsequent formation of Casparian strips, a cell wall modification of the root endodermis that determines an apoplastic barrier between the intraorganismal apoplasm and the extraorganismal apoplasm and prevents lateral diffusion. In Lactuca sativa (Garden lettuce), this protein is Casparian strip membrane protein 1.